A 542-amino-acid polypeptide reads, in one-letter code: GMP synthase [glutamine-hydrolyzing] (542 aa).

Residues 28-218 enclose the Glutamine amidotransferase type-1 domain; it reads IIVILDFGSQ…VYHICHCEPT (191 aa). The active-site Nucleophile is Cys-105. Catalysis depends on residues His-192 and Glu-194. In terms of domain architecture, GMPS ATP-PPase spans 219-417; sequence WTTAAFIEES…IGLPEEIVRR (199 aa). 246-252 is an ATP binding site; it reads SGGVDSS.

In terms of assembly, homodimer.

It catalyses the reaction XMP + L-glutamine + ATP + H2O = GMP + L-glutamate + AMP + diphosphate + 2 H(+). It participates in purine metabolism; GMP biosynthesis; GMP from XMP (L-Gln route): step 1/1. Functionally, catalyzes the synthesis of GMP from XMP. This is GMP synthase [glutamine-hydrolyzing] (guaA) from Synechocystis sp. (strain ATCC 27184 / PCC 6803 / Kazusa).